The chain runs to 361 residues: Peptide chain release factor 1 (361 aa).

Glutamine 235 carries the N5-methylglutamine modification.

This sequence belongs to the prokaryotic/mitochondrial release factor family. Methylated by PrmC. Methylation increases the termination efficiency of RF1.

The protein localises to the cytoplasm. Peptide chain release factor 1 directs the termination of translation in response to the peptide chain termination codons UAG and UAA. The sequence is that of Peptide chain release factor 1 from Azoarcus sp. (strain BH72).